We begin with the raw amino-acid sequence, 120 residues long: MNSTDRLLGVLLAVVALILLIRISEANDCDLCGRECVSACGTKMFRVCCFNYNRKRSNMPPLWMPRSKIWEGADDPLVLLQHLAKKSSGKSLTTTKDSSESRKKEISEDKALQFLWRNND.

A signal peptide spans 1-26; it reads MNSTDRLLGVLLAVVALILLIRISEA. Residues 87–106 are disordered; that stretch reads SSGKSLTTTKDSSESRKKEI. Positions 97-106 are enriched in basic and acidic residues; that stretch reads DSSESRKKEI.

The protein belongs to the scoloptoxin-20 family. Post-translationally, contains 3 disulfide bonds. Expressed by the venom gland.

It localises to the secreted. In Cormocephalus westwoodi (Westwood's green centipede), this protein is U-scoloptoxin(20)-Cw1a.